A 115-amino-acid polypeptide reads, in one-letter code: MSNGQSVKAVAKYVRISPHKVRQVLDQIRGRSYQEALMILEFLPYDAGSPIWQVVHSVAANAKNNYNLDKKKLVISEIFADEGPKLKRIRPRAQGRAYKILKPTCHITVVVKSIS.

This sequence belongs to the universal ribosomal protein uL22 family. As to quaternary structure, part of the 50S ribosomal subunit.

The protein resides in the plastid. It is found in the chloroplast. This protein binds specifically to 23S rRNA. In terms of biological role, the globular domain of the protein is located near the polypeptide exit tunnel on the outside of the subunit, while an extended beta-hairpin is found that lines the wall of the exit tunnel in the center of the 70S ribosome. This Thalassiosira pseudonana (Marine diatom) protein is Large ribosomal subunit protein uL22c (rpl22).